A 169-amino-acid polypeptide reads, in one-letter code: Endoribonuclease YbeY (169 aa).

The Zn(2+) site is built by His128, His132, and His138.

Belongs to the endoribonuclease YbeY family. Zn(2+) is required as a cofactor.

The protein resides in the cytoplasm. In terms of biological role, single strand-specific metallo-endoribonuclease involved in late-stage 70S ribosome quality control and in maturation of the 3' terminus of the 16S rRNA. The protein is Endoribonuclease YbeY of Rhizorhabdus wittichii (strain DSM 6014 / CCUG 31198 / JCM 15750 / NBRC 105917 / EY 4224 / RW1) (Sphingomonas wittichii).